The following is a 485-amino-acid chain: Kynureninase 1 (485 aa).

Pyridoxal 5'-phosphate-binding positions include Leu155, Thr156, 183 to 186 (FPSD), Asp267, His270, and Tyr292. An N6-(pyridoxal phosphate)lysine modification is found at Lys293. Pyridoxal 5'-phosphate is bound by residues Trp330 and Asn358.

Belongs to the kynureninase family. As to quaternary structure, homodimer. Pyridoxal 5'-phosphate serves as cofactor.

The protein localises to the cytoplasm. It catalyses the reaction L-kynurenine + H2O = anthranilate + L-alanine + H(+). The enzyme catalyses 3-hydroxy-L-kynurenine + H2O = 3-hydroxyanthranilate + L-alanine + H(+). Its pathway is amino-acid degradation; L-kynurenine degradation; L-alanine and anthranilate from L-kynurenine: step 1/1. The protein operates within cofactor biosynthesis; NAD(+) biosynthesis; quinolinate from L-kynurenine: step 2/3. Its function is as follows. Catalyzes the cleavage of L-kynurenine (L-Kyn) and L-3-hydroxykynurenine (L-3OHKyn) into anthranilic acid (AA) and 3-hydroxyanthranilic acid (3-OHAA), respectively. The protein is Kynureninase 1 (kyn-1) of Neurospora crassa (strain ATCC 24698 / 74-OR23-1A / CBS 708.71 / DSM 1257 / FGSC 987).